The sequence spans 165 residues: Sulfopyruvate decarboxylase subunit alpha (165 aa).

It belongs to the ComD family. In terms of assembly, heterododecamer composed of 6 subunits alpha and 6 subunits beta.

It carries out the reaction 3-sulfopyruvate + H(+) = sulfoacetaldehyde + CO2. The protein operates within cofactor biosynthesis; coenzyme M biosynthesis; sulfoacetaldehyde from phosphoenolpyruvate and sulfite: step 4/4. Its function is as follows. Involved in the biosynthesis of the coenzyme M (2-mercaptoethanesulfonic acid). Catalyzes the decarboxylation of sulfopyruvate to sulfoacetaldehyde. In Methanothermobacter thermautotrophicus (strain ATCC 29096 / DSM 1053 / JCM 10044 / NBRC 100330 / Delta H) (Methanobacterium thermoautotrophicum), this protein is Sulfopyruvate decarboxylase subunit alpha.